A 493-amino-acid chain; its full sequence is Protein LTV1 homolog (493 aa).

3 disordered regions span residues 42-63 (AAAR…QRQE), 97-119 (PNQA…KLML), and 170-207 (IQAM…DENE). Residues 176–207 (GDSDDEEWDDEDGEEQSDMDFDSDDLNEDENE) show a composition bias toward acidic residues. Phosphoserine occurs at positions 345, 369, 370, 424, and 427. The tract at residues 359-387 (VIDEPRRSRRSSASTNPAPIQIDPKTGLP) is disordered. Positions 437–468 (KDETHEEKKERKRLLKDYRNERRIEKKANTEA) form a coiled coil. Over residues 465–474 (NTEAFKEEKK) the composition is skewed to basic and acidic residues. The segment at 465–493 (NTEAFKEEKKRQTHVKINQRTNQQGASIV) is disordered. Residues 479–493 (VKINQRTNQQGASIV) show a composition bias toward polar residues.

This sequence belongs to the LTV1 family. Interacts with RpS3; the interaction is RNA-independent. Associates with free 40S ribosome subunits.

Its subcellular location is the cytoplasm. Necessary for the biogenesis of 40S ribosome subunits by regulating pre-rRNA processing. Non-ribosomal factor required for efficient nuclear export of the ribosomal 40S subunit. Necessary for endoreplication driven by Myc. In Drosophila melanogaster (Fruit fly), this protein is Protein LTV1 homolog.